The following is a 461-amino-acid chain: Photosystem II CP43 reaction center protein (461 aa).

Residues 1 to 2 (ME) constitute a propeptide that is removed on maturation. N-acetylthreonine is present on Thr-3. A Phosphothreonine modification is found at Thr-3. 5 helical membrane-spanning segments follow: residues 57–81 (LFEVAHFVPEKPMYEQGLILLPHLA), 122–143 (LIGPETLEETFPFFGYTWKDKN), 166–188 (KAMYFGGVYDTWAPGGGDTRIIT), 243–263 (QPWAWTRRAFVWSGEAYLSYS), and 279–300 (WFNNTAYPSEFYGPTGPEASQS). Glu-355 is a binding site for [CaMn4O5] cluster. A helical transmembrane segment spans residues 435–459 (RARAAAAGFEKGIDRLTEPVLSLKP).

The protein belongs to the PsbB/PsbC family. PsbC subfamily. PSII is composed of 1 copy each of membrane proteins PsbA, PsbB, PsbC, PsbD, PsbE, PsbF, PsbH, PsbI, PsbJ, PsbK, PsbL, PsbM, PsbT, PsbX, PsbY, PsbZ, Psb30/Ycf12, at least 3 peripheral proteins of the oxygen-evolving complex and a large number of cofactors. It forms dimeric complexes. It depends on Binds multiple chlorophylls and provides some of the ligands for the Ca-4Mn-5O cluster of the oxygen-evolving complex. It may also provide a ligand for a Cl- that is required for oxygen evolution. PSII binds additional chlorophylls, carotenoids and specific lipids. as a cofactor.

The protein resides in the plastid. It localises to the chloroplast thylakoid membrane. Its function is as follows. One of the components of the core complex of photosystem II (PSII). It binds chlorophyll and helps catalyze the primary light-induced photochemical processes of PSII. PSII is a light-driven water:plastoquinone oxidoreductase, using light energy to abstract electrons from H(2)O, generating O(2) and a proton gradient subsequently used for ATP formation. The polypeptide is Photosystem II CP43 reaction center protein (Stigeoclonium helveticum (Green alga)).